The sequence spans 833 residues: Protein PAT1 homolog 1 (833 aa).

Disordered regions lie at residues Asp279–Met313, Asn398–Pro427, and Glu492–Leu549. Positions Pro303–Met313 are enriched in low complexity. Residues Asn398 to His408 show a composition bias toward polar residues.

This sequence belongs to the PAT1 family.

The protein localises to the cytoplasm. Its subcellular location is the P-body. In terms of biological role, RNA-binding protein involved in deadenylation-dependent decapping of mRNAs, leading to the degradation of mRNAs. Acts as a scaffold protein that connects deadenylation and decapping machinery. Required for the recruitment of P-body components such as cgh-1 in somatic blastomeres. May play a role in recruiting the decapping enzyme dcap-1 to cytoplasmic puncta in the cell body of the posterior touch receptor neuron, PLM. This Caenorhabditis elegans protein is Protein PAT1 homolog 1.